The chain runs to 798 residues: Integrin beta-1 (798 aa).

Residues 1 to 20 form the signal peptide; the sequence is MNLQLIFWIGLISSVCCVFG. The Extracellular portion of the chain corresponds to 21 to 728; sequence QADENRCLKA…ETPECPTGPD (708 aa). One can recognise a PSI domain in the interval 26–76; it reads RCLKANAKSCGECIQAGPNCGWCTNSTFLQEGMPTSARCDDLEALKKKGCH. Disulfide bonds link C27/C45, C35/C464, C38/C64, C48/C75, C207/C213, C261/C301, C401/C415, C435/C462, C466/C486, C477/C489, C491/C500, C502/C533, C516/C531, C525/C536, C538/C553, C555/C576, C560/C574, C568/C579, C581/C590, C592/C615, C599/C613, C607/C618, C620/C630, C633/C636, C640/C691, C646/C665, C649/C661, and C699/C723. An N-linked (GlcNAc...) asparagine glycan is attached at N50. Positions 75-91 are enriched in basic and acidic residues; that stretch reads CHPNDIENPRGSKDIKK. Positions 75-105 are disordered; it reads CHPNDIENPRGSKDIKKNKNVTNRSKGTAEK. 2 N-linked (GlcNAc...) asparagine glycosylation sites follow: N94 and N97. The 239-residue stretch at 140–378 folds into the VWFA domain; sequence DYPIDLYYLM…QLIIDAYNSL (239 aa). Mg(2+) is bound by residues S152 and S154. S154, D157, D158, and E189 together coordinate Ca(2+). The segment at 207 to 213 is CX3CL1-binding; the sequence is CTNEQNC. N212 carries N-linked (GlcNAc...) asparagine glycosylation. Residues N244, D246, P248, and E249 each coordinate Ca(2+). E249 lines the Mg(2+) pocket. Residue N269 is glycosylated (N-linked (GlcNAc...) asparagine). The segment at 295-314 is CX3CL1-binding; the sequence is LPNDGQCHLENDVYTMSHYY. Ca(2+) is bound at residue A362. Residues N363, N406, and N417 are each glycosylated (N-linked (GlcNAc...) asparagine). Residues 383–465 form an interaction with TMEM182 region; sequence ILENSKLPEG…IILQFICECE (83 aa). I-EGF domains lie at 466–501, 502–554, 555–591, and 592–631; these read CQGEGIPGSPKCHDGNGTFECGACRCNEGRVGRHCE, CSTD…KFCE, CDNFNCDRSNGLICGGNGVCKCRVCECNPNYTGSACD, and CSLDTTSCMAVNGQICNGRGVCECGACKCTDPKFQGPTCE. A glycan (N-linked (GlcNAc...) asparagine) is linked at N481. N520 carries an N-linked (GlcNAc...) asparagine glycan. The N-linked (GlcNAc...) asparagine glycan is linked to N584. Residue N669 is glycosylated (N-linked (GlcNAc...) asparagine). The chain crosses the membrane as a helical span at residues 729–749; it reads IIPIVAGVVAGIVLIGLALLL. Topologically, residues 750-798 are cytoplasmic; the sequence is IWKLLMIIHDRREFAKFEKEKMNAKWDTGENPIYKSAVTTVVNPKYEGK. The tract at residues 762-767 is signal for sorting from recycling endosomes; interaction with ACAP1; sequence EFAKFE. Residue T777 is modified to Phosphothreonine. Y783 carries the post-translational modification Phosphotyrosine. At S785 the chain carries Phosphoserine. Residues 785–792 form an interaction with ITGB1BP1 region; it reads SAVTTVVN. T789 carries the phosphothreonine modification. K794 carries the post-translational modification N6-acetyllysine; alternate. K794 is covalently cross-linked (Glycyl lysine isopeptide (Lys-Gly) (interchain with G-Cter in SUMO1); alternate).

It belongs to the integrin beta chain family. In terms of assembly, interacts with seprase FAP (seprase); the interaction occurs at the cell surface of invadopodia membrane in a collagen-dependent manner. Heterodimer of an alpha and a beta subunit. Beta-1 associates with either alpha-1, alpha-2, alpha-3, alpha-4, alpha-5, alpha-6, alpha-7, alpha-8, alpha-9, alpha-10, alpha-11 or alpha-V. ITGA6:ITGB1 is found in a complex with CD9; interaction takes place in oocytes and is involved in sperm-egg fusion. Binds LGALS3BP and NMRK2, when associated with alpha-7, but not with alpha-5. Interacts with FLNB, FLNC and RANBP9. Interacts with KRT1 in the presence of RACK1 and SRC. Interacts with JAML; integrin alpha-4/beta-1 may regulate leukocyte to endothelial cells adhesion by controlling JAML homodimerization. Interacts with RAB21. Interacts (via the cytoplasmic region) with RAB25 (via the hypervariable C-terminal region). Interacts with MYO10. Interacts with ITGB1BP1 (via C-terminal region); the interaction is a prerequisite for focal adhesion disassembly. Interacts with TLN1; the interaction is prevented by competitive binding of ITGB1BP1. Interacts with ACAP1; required for ITGB1 recycling. Interacts with ASAP3. Interacts with FERMT2; the interaction is inhibited in presence of ITGB1BP1. Interacts with DAB2. Interacts with FGR and HCK. Interacts with EMP2; the interaction may be direct or indirect and ITGB1 has a heterodimer form. ITGA5:ITGB1 interacts with CCN3. ITGA4:ITGB1 is found in a ternary complex with CX3CR1 and CX3CL1. ITGA5:ITGB1 interacts with FBN1. ITGA5:ITGB1 interacts with IL1B. Interacts with MDK. ITGA4:ITGB1 interacts with MDK; this interaction mediates MDK-induced osteoblast cells migration through PXN phosphorylation. ITGA6:ITGB1 interacts with MDK; this interaction mediates MDK-induced neurite-outgrowth. ITGA5:ITGB1 interacts with ACE2. Interacts with TMEM182 and LAMB1. Interacts with tensin TNS3; TNS3 also interacts with PEAK1, thus acting as an adapter molecule to bridge the association of PEAK1 with ITGB1. Interacts with tensin TNS4; the interaction displaces tensin TNS3 from the ITGB1 cytoplasmic tail and promotes ITGB1 stability. Integrin ITGA9:ITGB1 interacts with SPP1/OPN (via N-terminus). Integrin ITGA9:ITGB1 interacts with TNC/TNFN3 (via the 3rd Fibronectin type-III domain). Integrins ITGA4:ITGB1 and ITGA9:ITGB1 interact with SVEP1 (via Sushi domain 21); thereby inhibit Ca(2+) intracellular signaling and as a result repress vasocontraction. ITGA4:ITGB1 and ITGA5:ITGB1 interacts with SELP. Interacts with CD248. ITGA5:ITGB1 interacts with IGFBP1. ITGA4:ITGB1 interacts with BCAM. Interacts with ADGRG6. As to quaternary structure, interacts with the C-terminal region of FLNC. Interacts with filamin FLNA isoform 3/VAR-1. Interacts with ACE2. Interacts with alpha-7B in cardiomyocytes of adult heart and alpha-7A and alpha-7B in adult skeletal muscle. Interacts with filamin FLNA isoform 3/VAR-1.

The protein resides in the cell membrane. It is found in the cell projection. The protein localises to the invadopodium membrane. Its subcellular location is the ruffle membrane. It localises to the recycling endosome. The protein resides in the melanosome. It is found in the lamellipodium. The protein localises to the ruffle. Its subcellular location is the cell junction. It localises to the focal adhesion. The protein resides in the sarcolemma. In terms of biological role, integrins alpha-1/beta-1, alpha-2/beta-1, alpha-10/beta-1 and alpha-11/beta-1 are receptors for collagen. Integrins alpha-1/beta-1 and alpha-2/beta-2 recognize the proline-hydroxylated sequence G-F-P-G-E-R in collagen. Integrins alpha-2/beta-1, alpha-3/beta-1, alpha-4/beta-1, alpha-5/beta-1, alpha-8/beta-1, alpha-10/beta-1, alpha-11/beta-1 and alpha-V/beta-1 are receptors for fibronectin. Alpha-4/beta-1 recognizes one or more domains within the alternatively spliced CS-1 and CS-5 regions of fibronectin. Integrin alpha-5/beta-1 is a receptor for fibrinogen. Integrin alpha-1/beta-1, alpha-2/beta-1, alpha-6/beta-1 and alpha-7/beta-1 are receptors for lamimin. Integrin alpha-6/beta-1 (ITGA6:ITGB1) is present in oocytes and is involved in sperm-egg fusion. Integrin alpha-4/beta-1 is a receptor for VCAM1 and recognizes the sequence Q-I-D-S in VCAM1. Integrin alpha-9/beta-1 is a receptor for VCAM1, cytotactin and osteopontin. It recognizes the sequence A-E-I-D-G-I-E-L in cytotactin. Integrin alpha-3/beta-1 is a receptor for epiligrin, thrombospondin and CSPG4. Integrin alpha-3/beta-1 provides a docking site for FAP (seprase) at invadopodia plasma membranes in a collagen-dependent manner and hence may participate in the adhesion, formation of invadopodia and matrix degradation processes, promoting cell invasion. Alpha-3/beta-1 may mediate with LGALS3 the stimulation by CSPG4 of endothelial cells migration. Integrin alpha-V/beta-1 is a receptor for vitronectin. Beta-1 integrins recognize the sequence R-G-D in a wide array of ligands. When associated with alpha-7/beta-1 integrin, regulates cell adhesion and laminin matrix deposition. Involved in promoting endothelial cell motility and angiogenesis. Involved in osteoblast compaction through the fibronectin fibrillogenesis cell-mediated matrix assembly process and the formation of mineralized bone nodules. May be involved in up-regulation of the activity of kinases such as PKC via binding to KRT1. Together with KRT1 and RACK1, serves as a platform for SRC activation or inactivation. Plays a mechanistic adhesive role during telophase, required for the successful completion of cytokinesis. ITGA4:ITGB1 binds to fractalkine (CX3CL1) and may act as its coreceptor in CX3CR1-dependent fractalkine signaling. ITGA4:ITGB1 and ITGA5:ITGB1 bind to PLA2G2A via a site (site 2) which is distinct from the classical ligand-binding site (site 1) and this induces integrin conformational changes and enhanced ligand binding to site 1. ITGA5:ITGB1 acts as a receptor for fibrillin-1 (FBN1) and mediates R-G-D-dependent cell adhesion to FBN1. ITGA5:ITGB1 acts as a receptor for fibronectin FN1 and mediates R-G-D-dependent cell adhesion to FN1. ITGA5:ITGB1 is a receptor for IL1B and binding is essential for IL1B signaling. ITGA5:ITGB3 is a receptor for soluble CD40LG and is required for CD40/CD40LG signaling. Plays an important role in myoblast differentiation and fusion during skeletal myogenesis. ITGA9:ITGB1 may play a crucial role in SVEP1/polydom-mediated myoblast cell adhesion. Integrins ITGA9:ITGB1 and ITGA4:ITGB1 repress PRKCA-mediated L-type voltage-gated channel Ca(2+) influx and ROCK-mediated calcium sensitivity in vascular smooth muscle cells via their interaction with SVEP1, thereby inhibit vasocontraction. The polypeptide is Integrin beta-1 (ITGB1) (Bos taurus (Bovine)).